The chain runs to 412 residues: Peptidase T (412 aa).

His81 contributes to the Zn(2+) binding site. Asp83 is an active-site residue. Asp144 lines the Zn(2+) pocket. Residue Glu178 is the Proton acceptor of the active site. Zn(2+) is bound by residues Glu179, Asp201, and His383.

Belongs to the peptidase M20B family. It depends on Zn(2+) as a cofactor.

The protein localises to the cytoplasm. It catalyses the reaction Release of the N-terminal residue from a tripeptide.. Its function is as follows. Cleaves the N-terminal amino acid of tripeptides. The sequence is that of Peptidase T from Bacillus cereus (strain ATCC 14579 / DSM 31 / CCUG 7414 / JCM 2152 / NBRC 15305 / NCIMB 9373 / NCTC 2599 / NRRL B-3711).